Reading from the N-terminus, the 331-residue chain is UDP-N-acetylenolpyruvoylglucosamine reductase (331 aa).

The FAD-binding PCMH-type domain maps to 54-221 (RVGGAAELYV…TQATFQLQPG (168 aa)). Arg200 is a catalytic residue. The Proton donor role is filled by Ser251. Residue Glu321 is part of the active site.

The protein belongs to the MurB family. Requires FAD as cofactor.

Its subcellular location is the cytoplasm. The enzyme catalyses UDP-N-acetyl-alpha-D-muramate + NADP(+) = UDP-N-acetyl-3-O-(1-carboxyvinyl)-alpha-D-glucosamine + NADPH + H(+). The protein operates within cell wall biogenesis; peptidoglycan biosynthesis. Functionally, cell wall formation. The polypeptide is UDP-N-acetylenolpyruvoylglucosamine reductase (Trichormus variabilis (strain ATCC 29413 / PCC 7937) (Anabaena variabilis)).